A 224-amino-acid polypeptide reads, in one-letter code: MSFTSLPLTEINHKLPARNIIESQWITLQLTLFAQEQQAKRVSHAIVSSAYRKAEKIIRDAYRYQREQKVEQQQELACLRKNTLEKMEVEWLEQHVKHLQDDENQFRSLVDHAAHHIKNSIEQVLLAWFDQQSVDSVMCHRLARQATAMAEEGALYLRIHPEKEALMRETFGKRFTLIIEPGFSPDQAELSSTRYAVEFSLSRHFNALLKWLRNGEDKRGSDEY.

It belongs to the SctL stator family. As to quaternary structure, the core secretion machinery of the T3SS is composed of approximately 20 different proteins, including cytoplasmic components, a base, an export apparatus and a needle. This subunit is part of the cytosolic complex. Interacts directly with SsaN/SctN2 (T3SS-2 ATPase).

Its subcellular location is the cytoplasm. In terms of biological role, component of the type III secretion system (T3SS), also called injectisome, which is used to inject bacterial effector proteins into eukaryotic host cells. Acts as a regulator of the SsaN/SctN2 ATPase activity. In Salmonella typhimurium (strain LT2 / SGSC1412 / ATCC 700720), this protein is SPI-2 type 3 secretion system stator protein.